Consider the following 895-residue polypeptide: Transcription factor SWI6 (895 aa).

The span at 1 to 45 shows a compositional bias: polar residues; that stretch reads MASTVAGNSFVSQQHPGNLHSANLQSQSQGFRRQNSTSSVPSTAS. The interval 1–107 is disordered; it reads MASTVAGNSF…SDQNVPQQPQ (107 aa). Positions 64–100 are enriched in low complexity; it reads MSSQQSQPPASQQSFSMSQTGSQPQPSQSSFRSYSDQ. In terms of domain architecture, HTH APSES-type spans 112–219; that stretch reads IYTAVYSNVE…NRNPDGSVSQ (108 aa). Positions 143-164 form a DNA-binding region, H-T-H motif; the sequence is ATQILKVAGVEKGKRTKILEKE. Disordered regions lie at residues 272–293 and 323–358; these read ARFD…SFQR and NMAF…NSFG. ANK repeat units follow at residues 458–488 and 607–636; these read QCHT…PFRV and AGDT…SPHI. The disordered stretch occupies residues 653–684; that stretch reads SDGAMKTKGDSGGDVENGDVGGSSQKSNESSN. Residues 674-684 show a composition bias toward polar residues; sequence GSSQKSNESSN. Residues 698–759 are a coiled coil; sequence SANFQEEIKN…VTNLQRAEER (62 aa).

It localises to the nucleus. Functionally, transcription factor that plays a role downstream of the MCK1-MKK2-MPS1 cascade. Required for hyphal morphogenesis and pathogenicity. Is an important oxidative stress response regulator and plays a positive role in the regulation of extracellular peroxidases. In Pyricularia oryzae (strain 70-15 / ATCC MYA-4617 / FGSC 8958) (Rice blast fungus), this protein is Transcription factor SWI6.